The following is a 147-amino-acid chain: Globin, major monomeric component (147 aa).

A Globin domain is found at 1 to 146 (GLSAAQRQVI…ISGALISGLQ (146 aa)). Position 90 (H90) interacts with heme b.

It belongs to the globin family. Monomer.

This chain is Globin, major monomeric component, found in Glycera dibranchiata (Bloodworm).